A 259-amino-acid chain; its full sequence is Hydroxyethylthiazole kinase (259 aa).

Position 38 (Met-38) interacts with substrate. Positions 113 and 158 each coordinate ATP. Gly-185 serves as a coordination point for substrate.

This sequence belongs to the Thz kinase family. Requires Mg(2+) as cofactor.

The catalysed reaction is 5-(2-hydroxyethyl)-4-methylthiazole + ATP = 4-methyl-5-(2-phosphooxyethyl)-thiazole + ADP + H(+). The protein operates within cofactor biosynthesis; thiamine diphosphate biosynthesis; 4-methyl-5-(2-phosphoethyl)-thiazole from 5-(2-hydroxyethyl)-4-methylthiazole: step 1/1. Catalyzes the phosphorylation of the hydroxyl group of 4-methyl-5-beta-hydroxyethylthiazole (THZ). This is Hydroxyethylthiazole kinase from Leuconostoc citreum (strain KM20).